Reading from the N-terminus, the 204-residue chain is NADH-quinone oxidoreductase subunit C (204 aa).

This sequence belongs to the complex I 30 kDa subunit family. As to quaternary structure, NDH-1 is composed of 14 different subunits. Subunits NuoB, C, D, E, F, and G constitute the peripheral sector of the complex.

The protein resides in the cell inner membrane. The enzyme catalyses a quinone + NADH + 5 H(+)(in) = a quinol + NAD(+) + 4 H(+)(out). In terms of biological role, NDH-1 shuttles electrons from NADH, via FMN and iron-sulfur (Fe-S) centers, to quinones in the respiratory chain. The immediate electron acceptor for the enzyme in this species is believed to be ubiquinone. Couples the redox reaction to proton translocation (for every two electrons transferred, four hydrogen ions are translocated across the cytoplasmic membrane), and thus conserves the redox energy in a proton gradient. This chain is NADH-quinone oxidoreductase subunit C, found in Vesicomyosocius okutanii subsp. Calyptogena okutanii (strain HA).